A 328-amino-acid chain; its full sequence is D-alanine--D-alanine ligase (328 aa).

An ATP-grasp domain is found at 118–317 (LSVLTKFNIP…MPQMLDNEIT (200 aa)). 146-201 (KKALGLPFFVKPNQSGSSLGVSKVDALDQLEKALEFAFAEDNEILIESYLNGTEVS) is a binding site for ATP. Mg(2+) contacts are provided by Asp-272, Glu-284, and Asn-286.

The protein belongs to the D-alanine--D-alanine ligase family. Mg(2+) serves as cofactor. Requires Mn(2+) as cofactor.

The protein localises to the cytoplasm. The catalysed reaction is 2 D-alanine + ATP = D-alanyl-D-alanine + ADP + phosphate + H(+). It participates in cell wall biogenesis; peptidoglycan biosynthesis. In terms of biological role, cell wall formation. This Flavobacterium psychrophilum (strain ATCC 49511 / DSM 21280 / CIP 103535 / JIP02/86) protein is D-alanine--D-alanine ligase.